Consider the following 89-residue polypeptide: Small ribosomal subunit protein uS15 (89 aa).

It belongs to the universal ribosomal protein uS15 family. In terms of assembly, part of the 30S ribosomal subunit. Forms a bridge to the 50S subunit in the 70S ribosome, contacting the 23S rRNA.

One of the primary rRNA binding proteins, it binds directly to 16S rRNA where it helps nucleate assembly of the platform of the 30S subunit by binding and bridging several RNA helices of the 16S rRNA. Functionally, forms an intersubunit bridge (bridge B4) with the 23S rRNA of the 50S subunit in the ribosome. In Haemophilus influenzae (strain 86-028NP), this protein is Small ribosomal subunit protein uS15.